A 375-amino-acid chain; its full sequence is N-acetylneuraminate epimerase (375 aa).

Positions 1–22 are cleaved as a signal peptide; it reads MKLTKTALCTALFATFTFSANA. Kelch repeat units follow at residues 43 to 87, 89 to 140, 142 to 176, 177 to 222, 225 to 273, 295 to 344, and 346 to 375; these read TVYV…AAVD, KLYV…ASHG, KVYI…EIVA, AYFD…TIQG, LVVV…LAGA, KQFK…SYNN, and VLLI…LTVE. The active-site Proton acceptor is glutamate 231.

It belongs to the NanM family. In terms of assembly, homodimer.

It localises to the periplasm. The catalysed reaction is N-acetyl-alpha-neuraminate = N-acetyl-beta-neuraminate. Its function is as follows. Converts alpha-N-acetylneuranimic acid (Neu5Ac) to the beta-anomer, accelerating the equilibrium between the alpha- and beta-anomers. Probably facilitates sialidase-negative bacteria to compete successfully for limited amounts of extracellular Neu5Ac, which is likely taken up in the beta-anomer. In addition, the rapid removal of sialic acid from solution might be advantageous to the bacterium to damp down host responses. This chain is N-acetylneuraminate epimerase, found in Haemophilus influenzae (strain 86-028NP).